We begin with the raw amino-acid sequence, 905 residues long: DNA mismatch repair protein MutS (905 aa).

The tract at residues 389 to 410 (ERPANPEGTYPTDAETSGDTLP) is disordered. An ATP-binding site is contributed by 638 to 645 (GPNMAGKS). The interval 826–847 (RDAARGTNSAPSRQTLPGLDLP) is disordered. The span at 831-840 (GTNSAPSRQT) shows a compositional bias: polar residues.

Belongs to the DNA mismatch repair MutS family.

Functionally, this protein is involved in the repair of mismatches in DNA. It is possible that it carries out the mismatch recognition step. This protein has a weak ATPase activity. This chain is DNA mismatch repair protein MutS, found in Nitratidesulfovibrio vulgaris (strain ATCC 29579 / DSM 644 / CCUG 34227 / NCIMB 8303 / VKM B-1760 / Hildenborough) (Desulfovibrio vulgaris).